The following is a 404-amino-acid chain: 11-beta-hydroxysteroid dehydrogenase type 2 (404 aa).

82–111 (TRAVLITGCDSGFGNATAKKLDTMGFTVLA) serves as a coordination point for NAD(+). Substrate is bound at residue serine 219. Catalysis depends on tyrosine 232, which acts as the Proton acceptor. The segment at 383–404 (LTSARDIAQDQGPRPDPSPTAQ) is disordered.

It belongs to the short-chain dehydrogenases/reductases (SDR) family. As to quaternary structure, interacts with ligand-free cytoplasmic NR3C2. Highly expressed in kidney, adrenal and colon; detected at lower levels on lung, liver, and spleen. Expressed in oocytes. Expressed in uterine tissues and in corpora lutea.

It localises to the microsome. Its subcellular location is the endoplasmic reticulum. It catalyses the reaction an 11beta-hydroxysteroid + NAD(+) = an 11-oxosteroid + NADH + H(+). It carries out the reaction corticosterone + NAD(+) = 11-dehydrocorticosterone + NADH + H(+). The enzyme catalyses cortisol + NAD(+) = cortisone + NADH + H(+). The catalysed reaction is 11beta,17beta-dihydroxyandrost-4-ene-3-one + NAD(+) = 17beta-hydroxyandrost-4-ene-3,11-dione + NADH + H(+). It catalyses the reaction 11beta-hydroxyandrost-4-ene-3,17-dione + NAD(+) = androst-4-ene-3,11,17-trione + NADH + H(+). It participates in steroid metabolism. Its activity is regulated as follows. Inhibited by glycyrrhetinic acid, carbenoloxone, 11-alpha-OH-progesterone and 11-beta-OH-progesterone. Its function is as follows. Catalyzes the conversion of biologically active 11beta-hydroxyglucocorticoids (11beta-hydroxysteroid) such as cortisol, to inactive 11-ketoglucocorticoids (11-oxosteroid) such as cortisone, in the presence of NAD(+). Functions as a dehydrogenase (oxidase), thereby decreasing the concentration of active glucocorticoids, thus protecting the nonselective mineralocorticoid receptor from occupation by glucocorticoids. Affinity towards corticosterone is higher than cortisol or dexamethasone. Plays an important role in maintaining glucocorticoids balance during preimplantation and protects the fetus from excessive maternal corticosterone exposure. Catalyzes the oxidation of 11beta-hydroxytestosterone (11beta,17beta-dihydroxyandrost-4-ene-3-one) to 11-ketotestosterone (17beta-hydroxyandrost-4-ene-3,11-dione), a major bioactive androgen. Catalyzes the conversion of 11beta-hydroxyandrostenedione (11beta-hydroxyandrost-4-ene-3,17-dione) to 11-ketoandrostenedione (androst-4-ene-3,11,17-trione), which can be further metabolized to 11-ketotestosterone. Converts 7-beta-25-dihydroxycholesterol to 7-oxo-25-hydroxycholesterol in vitro. 7-beta-25-dihydroxycholesterol (not 7-oxo-25-hydroxycholesterol) acts as ligand for the G-protein-coupled receptor (GPCR) Epstein-Barr virus-induced gene 2 (EBI2) and may thereby regulate immune cell migration. May protect ovulating oocytes and fertilizing spermatozoa from the adverse effects of cortisol. This chain is 11-beta-hydroxysteroid dehydrogenase type 2 (HSD11B2), found in Bos taurus (Bovine).